The sequence spans 390 residues: 8-amino-7-oxononanoate synthase (390 aa).

Residue Arg19 coordinates substrate. 106–107 (GY) is a pyridoxal 5'-phosphate binding site. His131 provides a ligand contact to substrate. The pyridoxal 5'-phosphate site is built by Ser176, His204, and Thr233. Lys236 carries the post-translational modification N6-(pyridoxal phosphate)lysine. Residue Thr350 coordinates substrate.

This sequence belongs to the class-II pyridoxal-phosphate-dependent aminotransferase family. BioF subfamily. Homodimer. Requires pyridoxal 5'-phosphate as cofactor.

The enzyme catalyses 6-carboxyhexanoyl-[ACP] + L-alanine + H(+) = (8S)-8-amino-7-oxononanoate + holo-[ACP] + CO2. It participates in cofactor biosynthesis; biotin biosynthesis. Its function is as follows. Catalyzes the decarboxylative condensation of pimeloyl-[acyl-carrier protein] and L-alanine to produce 8-amino-7-oxononanoate (AON), [acyl-carrier protein], and carbon dioxide. The chain is 8-amino-7-oxononanoate synthase from Pseudomonas putida (strain GB-1).